Reading from the N-terminus, the 146-residue chain is Coactosin (146 aa).

One can recognise an ADF-H domain in the interval 1 to 132 (MADVSSTELK…NEEELMTKVR (132 aa)).

Belongs to the actin-binding proteins ADF family. Coactosin subfamily. Post-translationally, the N-terminus is blocked.

It localises to the cytoplasm. Its subcellular location is the cytoskeleton. Functionally, binds to F-actin in a calcium independent manner. Binds to the filaments along their length. In Dictyostelium discoideum (Social amoeba), this protein is Coactosin (coaA).